Reading from the N-terminus, the 317-residue chain is Flavin-dependent thymidylate synthase (317 aa).

Serine 46 lines the FAD pocket. The tract at residues 55-166 (FEWKKEKWIE…ELETDMDFYT (112 aa)) is insert. The ThyX domain occupies 100–317 (AVKERIKEAF…YRGTDKKNVI (218 aa)). Residues 178 to 181 (QWMR), 189 to 193 (EVSKR), and arginine 259 contribute to the dUMP site. FAD-binding positions include 181–183 (RHR) and glutamate 189. The short motif at 181-191 (RHRFGSYNEVS) is the ThyX motif element. Residue asparagine 281 coordinates FAD. Position 286 (arginine 286) interacts with dUMP. Arginine 286 acts as the Involved in ionization of N3 of dUMP, leading to its activation in catalysis.

It belongs to the thymidylate synthase ThyX family. As to quaternary structure, homotetramer. FAD serves as cofactor.

The enzyme catalyses dUMP + (6R)-5,10-methylene-5,6,7,8-tetrahydrofolate + NADPH + H(+) = dTMP + (6S)-5,6,7,8-tetrahydrofolate + NADP(+). It participates in pyrimidine metabolism; dTTP biosynthesis. Functionally, catalyzes the reductive methylation of 2'-deoxyuridine-5'-monophosphate (dUMP) to 2'-deoxythymidine-5'-monophosphate (dTMP) while utilizing 5,10-methylenetetrahydrofolate (mTHF) as the methyl donor, and NADPH and FADH(2) as the reductant. The protein is Flavin-dependent thymidylate synthase of Aquifex aeolicus (strain VF5).